Reading from the N-terminus, the 1942-residue chain is GREB1-like protein (1942 aa).

Disordered regions lie at residues Ser-76–Gly-101, Pro-235–Thr-306, Met-325–Trp-373, and Thr-1123–Val-1256. Residues Glu-81 to Asp-90 show a composition bias toward acidic residues. Over residues Ser-237–Ser-253 the composition is skewed to low complexity. Positions Asn-338–Ser-362 are enriched in polar residues. The segment covering Thr-1127 to Arg-1155 has biased composition (basic and acidic residues). Low complexity predominate over residues Ser-1158–Thr-1171. Residues Glu-1172–Ser-1202 are compositionally biased toward polar residues. Over residues Ser-1212–Pro-1248 the composition is skewed to low complexity. The chain crosses the membrane as a helical span at residues Gly-1861 to Leu-1881.

The protein belongs to the GREB1 family.

It is found in the membrane. In terms of biological role, plays a major role in early metanephros development. The polypeptide is GREB1-like protein (greb1l) (Danio rerio (Zebrafish)).